The primary structure comprises 398 residues: Transcription termination factor 1, mitochondrial (398 aa).

The transit peptide at 1–57 (MQSLSLGQTSISKGLNYLTIMAPGNLWHMRNNFLFGSRCWMTRFSAENIFKSVSFRL) directs the protein to the mitochondrion. Interaction with DNA stretches follow at residues 169-170 (RS), 246-250 (QSTKR), 323-330 (AEKKFNDK), 354-357 (SIST), and 383-390 (SKKRYEAK).

The protein belongs to the mTERF family. Monomer. In terms of processing, phosphoprotein with mostly four phosphate groups. While the DNA-binding activity is unaffected by the phosphorylation state, only the phosphorylated form of the protein is active for termination activity. Functioning seems to be regulated by phosphorylation.

Its subcellular location is the mitochondrion. Functionally, transcription termination factor. Binds to a 28 bp region within the tRNA(Leu(uur)) gene at a position immediately adjacent to and downstream of the 16S rRNA gene; this region comprises a tridecamer sequence critical for directing accurate termination. Binds DNA along the major grove and promotes DNA bending and partial unwinding. Promotes base flipping. Transcription termination activity appears to be polarized with highest specificity for transcripts initiated on the light strand. The sequence is that of Transcription termination factor 1, mitochondrial (MTERF1) from Pongo abelii (Sumatran orangutan).